Consider the following 245-residue polypeptide: 6-carboxyhexanoate--CoA ligase (245 aa).

The protein belongs to the BioW family. As to quaternary structure, homodimer. Mg(2+) serves as cofactor.

The catalysed reaction is heptanedioate + ATP + CoA = 6-carboxyhexanoyl-CoA + AMP + diphosphate. It participates in metabolic intermediate metabolism; pimeloyl-CoA biosynthesis; pimeloyl-CoA from pimelate: step 1/1. In terms of biological role, catalyzes the transformation of pimelate into pimeloyl-CoA with concomitant hydrolysis of ATP to AMP. The chain is 6-carboxyhexanoate--CoA ligase from Sulfurihydrogenibium azorense (strain DSM 15241 / OCM 825 / Az-Fu1).